The primary structure comprises 321 residues: Lipoyl synthase (321 aa).

[4Fe-4S] cluster contacts are provided by Cys68, Cys73, Cys79, Cys94, Cys98, Cys101, and Ser308. In terms of domain architecture, Radical SAM core spans 80-297 (FNHGTATFMI…KDVAMGLGFS (218 aa)).

The protein belongs to the radical SAM superfamily. Lipoyl synthase family. [4Fe-4S] cluster serves as cofactor.

It is found in the cytoplasm. It catalyses the reaction [[Fe-S] cluster scaffold protein carrying a second [4Fe-4S](2+) cluster] + N(6)-octanoyl-L-lysyl-[protein] + 2 oxidized [2Fe-2S]-[ferredoxin] + 2 S-adenosyl-L-methionine + 4 H(+) = [[Fe-S] cluster scaffold protein] + N(6)-[(R)-dihydrolipoyl]-L-lysyl-[protein] + 4 Fe(3+) + 2 hydrogen sulfide + 2 5'-deoxyadenosine + 2 L-methionine + 2 reduced [2Fe-2S]-[ferredoxin]. Its pathway is protein modification; protein lipoylation via endogenous pathway; protein N(6)-(lipoyl)lysine from octanoyl-[acyl-carrier-protein]: step 2/2. Its function is as follows. Catalyzes the radical-mediated insertion of two sulfur atoms into the C-6 and C-8 positions of the octanoyl moiety bound to the lipoyl domains of lipoate-dependent enzymes, thereby converting the octanoylated domains into lipoylated derivatives. The polypeptide is Lipoyl synthase (Aeromonas hydrophila subsp. hydrophila (strain ATCC 7966 / DSM 30187 / BCRC 13018 / CCUG 14551 / JCM 1027 / KCTC 2358 / NCIMB 9240 / NCTC 8049)).